A 392-amino-acid polypeptide reads, in one-letter code: Imidazolonepropionase (392 aa).

Residues His69 and His71 each contribute to the Fe(3+) site. Residues His69 and His71 each coordinate Zn(2+). 3 residues coordinate 4-imidazolone-5-propanoate: Arg78, Tyr136, and His163. Residue Tyr136 participates in N-formimidoyl-L-glutamate binding. His226 contacts Fe(3+). A Zn(2+)-binding site is contributed by His226. Position 229 (Gln229) interacts with 4-imidazolone-5-propanoate. Residue Asp302 coordinates Fe(3+). Residue Asp302 coordinates Zn(2+). Positions 304 and 306 each coordinate N-formimidoyl-L-glutamate. Residue Ser307 coordinates 4-imidazolone-5-propanoate.

Belongs to the metallo-dependent hydrolases superfamily. HutI family. It depends on Zn(2+) as a cofactor. Fe(3+) is required as a cofactor.

The protein localises to the cytoplasm. It carries out the reaction 4-imidazolone-5-propanoate + H2O = N-formimidoyl-L-glutamate. The protein operates within amino-acid degradation; L-histidine degradation into L-glutamate; N-formimidoyl-L-glutamate from L-histidine: step 3/3. Functionally, catalyzes the hydrolytic cleavage of the carbon-nitrogen bond in imidazolone-5-propanoate to yield N-formimidoyl-L-glutamate. It is the third step in the universal histidine degradation pathway. This Salinispora arenicola (strain CNS-205) protein is Imidazolonepropionase.